Here is a 239-residue protein sequence, read N- to C-terminus: DnaA regulatory inactivator Hda (239 aa).

The protein belongs to the DnaA family. HdA subfamily. As to quaternary structure, the active form seems to be an ADP-bound monomer. Forms the RIDA complex (regulatory inactivation of DnaA) of ATP-DnaA, ADP-Hda and the DNA-loaded beta sliding clamp (dnaN).

Its function is as follows. Mediates the interaction of DNA replication initiator protein DnaA with DNA polymerase subunit beta sliding clamp (dnaN). Stimulates hydrolysis of ATP-DnaA to ADP-DnaA, rendering DnaA inactive for reinitiation, a process called regulatory inhibition of DnaA or RIDA. The polypeptide is DnaA regulatory inactivator Hda (Yersinia pseudotuberculosis serotype O:1b (strain IP 31758)).